Consider the following 557-residue polypeptide: (-)-germacrene D synthase (557 aa).

Mg(2+) is bound by residues Asp-310, Asp-314, and Glu-462. The DDXXD motif motif lies at 310–314; it reads DDIYD.

It belongs to the terpene synthase family. Tpsa subfamily. It depends on Mg(2+) as a cofactor. As to expression, expressed in flowers. Detected in stems, young leaves and tendrils.

Its subcellular location is the cytoplasm. The catalysed reaction is (2E,6E)-farnesyl diphosphate + H2O = (1E,4S,5E,7R)-germacra-1(10),5-dien-11-ol + diphosphate. It catalyses the reaction (2E,6E)-farnesyl diphosphate = (-)-germacrene D + diphosphate. It functions in the pathway secondary metabolite biosynthesis; terpenoid biosynthesis. Functionally, involved in the biosynthesis of germacrene D. Can use farnesyl diphosphate as substrate, but not geranyl diphosphate or geranylgeranyl diphosphate. Produces mainly (-)-germacrene D along with gamma-cadinene. The sequence is that of (-)-germacrene D synthase from Vitis vinifera (Grape).